A 185-amino-acid chain; its full sequence is Ribosome-recycling factor (185 aa).

Positions 144–164 (KEGEAGEDEVGRAEKDLDKTT) are disordered.

This sequence belongs to the RRF family.

Its subcellular location is the cytoplasm. Responsible for the release of ribosomes from messenger RNA at the termination of protein biosynthesis. May increase the efficiency of translation by recycling ribosomes from one round of translation to another. In Mycobacterium tuberculosis (strain CDC 1551 / Oshkosh), this protein is Ribosome-recycling factor.